The chain runs to 126 residues: Fluoride-specific ion channel FluC 2 (126 aa).

A run of 4 helical transmembrane segments spans residues 11–31 (IFLI…LCEL), 34–54 (GQLG…MIMY), 66–86 (GKIA…TFAV), and 93–113 (FIPA…GVFF). Residues glycine 76 and threonine 79 each contribute to the Na(+) site.

This sequence belongs to the fluoride channel Fluc/FEX (TC 1.A.43) family.

Its subcellular location is the cell membrane. The catalysed reaction is fluoride(in) = fluoride(out). With respect to regulation, na(+) is not transported, but it plays an essential structural role and its presence is essential for fluoride channel function. Functionally, fluoride-specific ion channel. Important for reducing fluoride concentration in the cell, thus reducing its toxicity. The sequence is that of Fluoride-specific ion channel FluC 2 from Methanosarcina acetivorans (strain ATCC 35395 / DSM 2834 / JCM 12185 / C2A).